The chain runs to 530 residues: Na(+)/H(+) antiporter NhaB (530 aa).

The next 11 helical transmembrane spans lie at 23 to 43 (VAII…NPFL), 45 to 65 (GWLL…CYPL), 90 to 110 (LVAN…IYFM), 113 to 133 (LLLF…LLSI), 140 to 160 (AFLS…SVAV), 205 to 225 (LLMH…VGEP), 238 to 258 (FGEF…AGML), 308 to 328 (IAVW…LIGL), 351 to 371 (EEAL…AVII), 451 to 471 (ATPN…APLI), and 479 to 499 (VIMA…GIMF).

This sequence belongs to the NhaB Na(+)/H(+) (TC 2.A.34) antiporter family.

The protein localises to the cell inner membrane. It carries out the reaction 2 Na(+)(in) + 3 H(+)(out) = 2 Na(+)(out) + 3 H(+)(in). Its function is as follows. Na(+)/H(+) antiporter that extrudes sodium in exchange for external protons. The chain is Na(+)/H(+) antiporter NhaB from Vibrio cholerae serotype O1 (strain ATCC 39541 / Classical Ogawa 395 / O395).